A 204-amino-acid polypeptide reads, in one-letter code: Large ribosomal subunit protein mL67 (204 aa).

This sequence belongs to the mitochondrion-specific ribosomal protein mL67 family.

Its subcellular location is the nucleus. The protein resides in the mitochondrion. Functionally, transcription factor involved in regulation of RNA polymerase II-dependent transcription. Also involved in regulation of mitochondrial DNA recombination, maintenance and repair, and generation of homoplasmic cells. This chain is Large ribosomal subunit protein mL67 (MHR1), found in Yarrowia lipolytica (strain CLIB 122 / E 150) (Yeast).